We begin with the raw amino-acid sequence, 312 residues long: MRNSIDLTKKIKEKAFEEGFDAVGIAKVPGSSRIKLRTASLERWLQAGHQATMEWMKSPRRKDIENMLQGVKSILAVGLNYYVDTERESKDISIARYGWGKDYHKIIEEKLKKVAKFLETERPNAKWKICVDTSAFLDKAWAEEAGIGWIGKHSNVINSEIGSWMFLGHLLSTEVLEADKPSKPICGECEKCIEACPTKAIEEPFIVNSYKCLAYHTLENRDQELPENIINKMGNWIAGCDICQDVCPWNQKHIPSTTEPDLQPSEWILHTTKQDLLSWDDAKWKESLKNSALKRIKPWMWRRNIDSISKKT.

The Proton donor role is filled by Asp-132. One can recognise a 4Fe-4S ferredoxin-type 1 domain in the interval 174–206 (EVLEADKPSKPICGECEKCIEACPTKAIEEPFI). Residues Cys-186, Cys-189, Cys-192, Cys-196, Cys-212, Cys-240, Cys-243, and Cys-247 each coordinate [4Fe-4S] cluster. The 4Fe-4S ferredoxin-type 2 domain occupies 226–257 (PENIINKMGNWIAGCDICQDVCPWNQKHIPST).

Belongs to the QueG family. As to quaternary structure, monomer. Cob(II)alamin is required as a cofactor. The cofactor is [4Fe-4S] cluster.

The protein resides in the cytoplasm. It carries out the reaction epoxyqueuosine(34) in tRNA + AH2 = queuosine(34) in tRNA + A + H2O. The protein operates within tRNA modification; tRNA-queuosine biosynthesis. Functionally, catalyzes the conversion of epoxyqueuosine (oQ) to queuosine (Q), which is a hypermodified base found in the wobble positions of tRNA(Asp), tRNA(Asn), tRNA(His) and tRNA(Tyr). This is Epoxyqueuosine reductase from Prochlorococcus marinus (strain NATL2A).